Reading from the N-terminus, the 408-residue chain is Digeranylgeranylglycerophospholipid reductase 1 (408 aa).

10 residues coordinate FAD: Ala-15, Glu-34, Cys-45, Ala-46, Gly-48, Arg-99, Val-123, Asp-279, Gly-291, and Ile-292.

Belongs to the geranylgeranyl reductase family. DGGGPL reductase subfamily. It depends on FAD as a cofactor.

The catalysed reaction is a 2,3-bis-O-phytanyl-sn-glycerol 1-phospholipid + 8 oxidized 2[4Fe-4S]-[ferredoxin] = a 2,3-bis-O-(geranylgeranyl)-sn-glycerol 1-phospholipid + 8 reduced 2[4Fe-4S]-[ferredoxin] + 16 H(+). It catalyses the reaction 2,3-bis-O-(phytanyl)-sn-glycerol 1-phosphate + 8 oxidized 2[4Fe-4S]-[ferredoxin] = 2,3-bis-O-(geranylgeranyl)-sn-glycerol 1-phosphate + 8 reduced 2[4Fe-4S]-[ferredoxin] + 16 H(+). The enzyme catalyses a 2,3-bis-O-phytanyl-sn-glycerol 1-phospholipid + 8 A = a 2,3-bis-O-(geranylgeranyl)-sn-glycerol 1-phospholipid + 8 AH2. It carries out the reaction CDP-2,3-bis-O-(geranylgeranyl)-sn-glycerol + 8 AH2 = CDP-2,3-bis-O-(phytanyl)-sn-glycerol + 8 A. The catalysed reaction is archaetidylserine + 8 AH2 = 2,3-bis-O-phytanyl-sn-glycero-3-phospho-L-serine + 8 A. The protein operates within membrane lipid metabolism; glycerophospholipid metabolism. In terms of biological role, is involved in the reduction of 2,3-digeranylgeranylglycerophospholipids (unsaturated archaeols) into 2,3-diphytanylglycerophospholipids (saturated archaeols) in the biosynthesis of archaeal membrane lipids. Catalyzes the formation of archaetidic acid (2,3-di-O-phytanyl-sn-glyceryl phosphate) from 2,3-di-O-geranylgeranylglyceryl phosphate (DGGGP) via the hydrogenation of each double bond of the isoprenoid chains. Is also probably able to reduce double bonds of geranyl groups in CDP-2,3-bis-O-(geranylgeranyl)-sn-glycerol and archaetidylserine, thus acting at various stages in the biosynthesis of archaeal membrane lipids. The sequence is that of Digeranylgeranylglycerophospholipid reductase 1 from Methanococcoides burtonii (strain DSM 6242 / NBRC 107633 / OCM 468 / ACE-M).